A 327-amino-acid chain; its full sequence is 2-keto-3-deoxygluconate permease (327 aa).

10 helical membrane passes run 10-30, 42-62, 73-93, 95-115, 139-159, 163-183, 199-219, 224-244, 254-274, and 289-309; these read IPGGMMLVPLFLGALCHTFSP, GMITGTVPILAVWFFCMGASI, KSGTLVVTKIAVAWVVAAIAS, IIPEHGVEVGFFAGLSTLALV, AGAFVLMSLESGPLMTMIILG, IASFEPHVFVGAVLPFLVGFA, VQTLIPFFAFALGNTIDLTVI, LLGILLGVAVIIVTGIPLIIA, TAGIAASSSAGAAVATPVLIA, and SLVATAVIVTSILVPILTSIW.

It belongs to the KdgT transporter family.

The protein localises to the cell inner membrane. It carries out the reaction 2-dehydro-3-deoxy-D-gluconate(in) + H(+)(in) = 2-dehydro-3-deoxy-D-gluconate(out) + H(+)(out). Its function is as follows. Catalyzes the proton-dependent uptake of 2-keto-3-deoxygluconate (KDG) into the cell. The protein is 2-keto-3-deoxygluconate permease of Escherichia coli O7:K1 (strain IAI39 / ExPEC).